Consider the following 252-residue polypeptide: 14-3-3-like protein GF14 omicron (252 aa).

Phosphoserine occurs at positions 65 and 188.

It belongs to the 14-3-3 family.

The protein localises to the nucleus. Its subcellular location is the cytoplasm. Functionally, is associated with a DNA binding complex that binds to the G box, a well-characterized cis-acting DNA regulatory element found in plant genes. This is 14-3-3-like protein GF14 omicron (GRF11) from Arabidopsis thaliana (Mouse-ear cress).